We begin with the raw amino-acid sequence, 125 residues long: Prefoldin subunit beta (125 aa).

This sequence belongs to the prefoldin subunit beta family. As to quaternary structure, heterohexamer of two alpha and four beta subunits.

Its subcellular location is the cytoplasm. Molecular chaperone capable of stabilizing a range of proteins. Seems to fulfill an ATP-independent, HSP70-like function in archaeal de novo protein folding. This Pyrobaculum islandicum (strain DSM 4184 / JCM 9189 / GEO3) protein is Prefoldin subunit beta.